Consider the following 157-residue polypeptide: Putative pre-16S rRNA nuclease (157 aa).

It belongs to the YqgF nuclease family.

It is found in the cytoplasm. Could be a nuclease involved in processing of the 5'-end of pre-16S rRNA. The sequence is that of Putative pre-16S rRNA nuclease from Parasynechococcus marenigrum (strain WH8102).